The sequence spans 241 residues: Orotidine 5'-phosphate decarboxylase (241 aa).

Substrate-binding positions include Asp-15, Lys-37, Asp-64–Thr-73, Thr-126, Arg-187, Gln-196, Gly-216, and Arg-217. The active-site Proton donor is Lys-66.

This sequence belongs to the OMP decarboxylase family. Type 1 subfamily. Homodimer.

The catalysed reaction is orotidine 5'-phosphate + H(+) = UMP + CO2. It functions in the pathway pyrimidine metabolism; UMP biosynthesis via de novo pathway; UMP from orotate: step 2/2. Its function is as follows. Catalyzes the decarboxylation of orotidine 5'-monophosphate (OMP) to uridine 5'-monophosphate (UMP). This chain is Orotidine 5'-phosphate decarboxylase, found in Trichlorobacter lovleyi (strain ATCC BAA-1151 / DSM 17278 / SZ) (Geobacter lovleyi).